A 60-amino-acid polypeptide reads, in one-letter code: UPF0434 protein YcaR (60 aa).

The protein belongs to the UPF0434 family.

The protein is UPF0434 protein YcaR of Escherichia coli O81 (strain ED1a).